Reading from the N-terminus, the 161-residue chain is MAAAIGLRVVGRRLGLGLGRTPRRALWGGHSKKEEKEVEENSIIPQEKKEPSLICPPPRSRKYVPPENIQSILEARVKEICGPSLAGNWLQTSLKDNRLKYQLLAQLAAELGHAVPNSQLHLMCSAQDVLTFYSTPVKDMLKFDELCAAELPPNLKIAWER.

The disordered stretch occupies residues 27-51 (WGGHSKKEEKEVEENSIIPQEKKEP).

This sequence belongs to the mitochondrion-specific ribosomal protein mL50 family. Component of the mitochondrial ribosome large subunit (39S) which comprises a 16S rRNA and about 50 distinct proteins.

The protein resides in the mitochondrion. This Gallus gallus (Chicken) protein is Large ribosomal subunit protein mL50 (MRPL50).